Reading from the N-terminus, the 341-residue chain is Fructose-1,6-bisphosphatase, cytosolic (341 aa).

Mg(2+) is bound by residues E100, D121, L123, and D124. Substrate contacts are provided by residues 124-127 (DGSS), N215, Y247, Y267, and K277. E283 contributes to the Mg(2+) binding site.

This sequence belongs to the FBPase class 1 family. Mg(2+) is required as a cofactor.

It localises to the cytoplasm. The catalysed reaction is beta-D-fructose 1,6-bisphosphate + H2O = beta-D-fructose 6-phosphate + phosphate. This Musa acuminata (Banana) protein is Fructose-1,6-bisphosphatase, cytosolic (FBPban1).